Consider the following 529-residue polypeptide: 56 kDa type-specific antigen (529 aa).

An N-terminal signal peptide occupies residues 1-22; sequence MKKIMLIASAMSALSLPFSASA. The chain crosses the membrane as a helical span at residues 67–87; that stretch reads LTTSMPFGGTLAAGMTIAPGF. Over residues 106-116 the composition is skewed to basic and acidic residues; the sequence is GKTGSDADIRS. 2 disordered regions span residues 106–134 and 392–424; these read GKTG…PQPT and DGGC…KGKE. A helical transmembrane segment spans residues 477–492; that stretch reads TGMVASGALGVAINAA.

It is found in the cell membrane. Functionally, may be an adherent factor for rickettsial adsorption to the host-cell surface and a determinant of virulence of individual rickettsial strain. It is the major outer membrane protein. This is 56 kDa type-specific antigen from Orientia tsutsugamushi (Rickettsia tsutsugamushi).